The sequence spans 170 residues: Probable Brix domain-containing ribosomal biogenesis protein (170 aa).

The region spanning 6–170 (TRIVITSSRD…IKFLKMILEA (165 aa)) is the Brix domain.

In terms of biological role, probably involved in the biogenesis of the ribosome. The polypeptide is Probable Brix domain-containing ribosomal biogenesis protein (Saccharolobus solfataricus (strain ATCC 35092 / DSM 1617 / JCM 11322 / P2) (Sulfolobus solfataricus)).